The following is a 211-amino-acid chain: ATP-dependent Clp protease proteolytic subunit 1 (211 aa).

S107 functions as the Nucleophile in the catalytic mechanism. Residue H132 is part of the active site.

It belongs to the peptidase S14 family. As to quaternary structure, fourteen ClpP subunits assemble into 2 heptameric rings which stack back to back to give a disk-like structure with a central cavity, resembling the structure of eukaryotic proteasomes.

It localises to the cytoplasm. The catalysed reaction is Hydrolysis of proteins to small peptides in the presence of ATP and magnesium. alpha-casein is the usual test substrate. In the absence of ATP, only oligopeptides shorter than five residues are hydrolyzed (such as succinyl-Leu-Tyr-|-NHMec, and Leu-Tyr-Leu-|-Tyr-Trp, in which cleavage of the -Tyr-|-Leu- and -Tyr-|-Trp bonds also occurs).. Functionally, cleaves peptides in various proteins in a process that requires ATP hydrolysis. Has a chymotrypsin-like activity. Plays a major role in the degradation of misfolded proteins. The protein is ATP-dependent Clp protease proteolytic subunit 1 of Mycolicibacterium paratuberculosis (strain ATCC BAA-968 / K-10) (Mycobacterium paratuberculosis).